The primary structure comprises 1068 residues: Tricorn protease homolog (1068 aa).

The interval 61 to 326 (MKAYYMYPDI…DSLTKLDINL (266 aa)) is six-bladed beta propeller. Residues 338–686 (VNVMEYMNEA…RKGGVIDLSR (349 aa)) are seven-bladed beta propeller. The tract at residues 692–762 (EPEKEWRQML…RTSHSYETAY (71 aa)) is C-1. H756 acts as the Charge relay system in catalysis. Residues 771–864 (SVGGLGAEFE…RVTVKVLKDE (94 aa)) are PDZ-like. The tract at residues 865 to 1068 (RFLIYRYWVE…TAIELALKQL (204 aa)) is C-2. Position 927 (G927) interacts with substrate. The Nucleophile role is filled by S974. Residue E1032 is the Charge relay system of the active site.

Belongs to the peptidase S41B family.

Its subcellular location is the cytoplasm. In terms of biological role, degrades oligopeptides in a sequential manner. This chain is Tricorn protease homolog (tri), found in Saccharolobus solfataricus (strain ATCC 35092 / DSM 1617 / JCM 11322 / P2) (Sulfolobus solfataricus).